A 249-amino-acid polypeptide reads, in one-letter code: Methyl-coenzyme M reductase I subunit gamma (249 aa).

Arg120 lines the coenzyme M pocket.

This sequence belongs to the methyl-coenzyme M reductase gamma subunit family. In terms of assembly, MCR is a hexamer of two alpha, two beta, and two gamma chains, forming a dimer of heterotrimers. The cofactor is coenzyme F430.

The protein resides in the cytoplasm. It carries out the reaction coenzyme B + methyl-coenzyme M = methane + coenzyme M-coenzyme B heterodisulfide. Its pathway is one-carbon metabolism; methyl-coenzyme M reduction; methane from methyl-coenzyme M: step 1/1. In terms of biological role, component of the methyl-coenzyme M reductase (MCR) I that catalyzes the reductive cleavage of methyl-coenzyme M (CoM-S-CH3 or 2-(methylthio)ethanesulfonate) using coenzyme B (CoB or 7-mercaptoheptanoylthreonine phosphate) as reductant which results in the production of methane and the mixed heterodisulfide of CoB and CoM (CoM-S-S-CoB). This is the final step in methanogenesis. In Methanothermobacter thermautotrophicus (strain ATCC 29096 / DSM 1053 / JCM 10044 / NBRC 100330 / Delta H) (Methanobacterium thermoautotrophicum), this protein is Methyl-coenzyme M reductase I subunit gamma (mcrG).